A 188-amino-acid chain; its full sequence is dITP/XTP pyrophosphatase (188 aa).

A substrate-binding site is contributed by 7–12 (TGNIGK). Mg(2+)-binding residues include Glu36 and Asp65. The active-site Proton acceptor is Asp65. Substrate-binding positions include Ser66, 141–144 (FGYD), Lys164, and 169–170 (HR).

The protein belongs to the HAM1 NTPase family. Homodimer. Requires Mg(2+) as cofactor.

It carries out the reaction XTP + H2O = XMP + diphosphate + H(+). It catalyses the reaction dITP + H2O = dIMP + diphosphate + H(+). The enzyme catalyses ITP + H2O = IMP + diphosphate + H(+). In terms of biological role, pyrophosphatase that catalyzes the hydrolysis of nucleoside triphosphates to their monophosphate derivatives, with a high preference for the non-canonical purine nucleotides XTP (xanthosine triphosphate), dITP (deoxyinosine triphosphate) and ITP. Seems to function as a house-cleaning enzyme that removes non-canonical purine nucleotides from the nucleotide pool, thus preventing their incorporation into DNA/RNA and avoiding chromosomal lesions. This Methanopyrus kandleri (strain AV19 / DSM 6324 / JCM 9639 / NBRC 100938) protein is dITP/XTP pyrophosphatase.